The chain runs to 481 residues: Probable glycine dehydrogenase (decarboxylating) subunit 2 (481 aa).

Residues 1–23 (MVIFEKTRGKNSPSVMPSKKGDV) are disordered. Lys263 bears the N6-(pyridoxal phosphate)lysine mark.

The protein belongs to the GcvP family. C-terminal subunit subfamily. The glycine cleavage system is composed of four proteins: P, T, L and H. In this organism, the P 'protein' is a heterodimer of two subunits. It depends on pyridoxal 5'-phosphate as a cofactor.

The catalysed reaction is N(6)-[(R)-lipoyl]-L-lysyl-[glycine-cleavage complex H protein] + glycine + H(+) = N(6)-[(R)-S(8)-aminomethyldihydrolipoyl]-L-lysyl-[glycine-cleavage complex H protein] + CO2. Functionally, the glycine cleavage system catalyzes the degradation of glycine. The P protein binds the alpha-amino group of glycine through its pyridoxal phosphate cofactor; CO(2) is released and the remaining methylamine moiety is then transferred to the lipoamide cofactor of the H protein. This chain is Probable glycine dehydrogenase (decarboxylating) subunit 2, found in Francisella philomiragia subsp. philomiragia (strain ATCC 25017 / CCUG 19701 / FSC 153 / O#319-036).